Here is a 280-residue protein sequence, read N- to C-terminus: Fructose-1,6-bisphosphatase class 1 (280 aa).

Glutamate 64, aspartate 83, leucine 85, and aspartate 86 together coordinate Mg(2+). Substrate contacts are provided by residues 86–89, tyrosine 189, and lysine 220; that span reads DGSS. Position 226 (glutamate 226) interacts with Mg(2+).

The protein belongs to the FBPase class 1 family. In terms of assembly, homotetramer. Mg(2+) is required as a cofactor.

The protein localises to the cytoplasm. It catalyses the reaction beta-D-fructose 1,6-bisphosphate + H2O = beta-D-fructose 6-phosphate + phosphate. It functions in the pathway carbohydrate biosynthesis; gluconeogenesis. The sequence is that of Fructose-1,6-bisphosphatase class 1 from Campylobacter jejuni subsp. jejuni serotype O:23/36 (strain 81-176).